A 201-amino-acid chain; its full sequence is Probable GTP-binding protein EngB (201 aa).

In terms of domain architecture, EngB-type G spans 22–197 (RLPEYAFIGR…LDYIDSINQE (176 aa)). GTP is bound by residues 30–37 (GRSNVGKS), 57–61 (GKTQL), 75–78 (DLPG), 142–145 (TKAD), and 173–178 (VFITSS). The Mg(2+) site is built by Ser37 and Thr59.

The protein belongs to the TRAFAC class TrmE-Era-EngA-EngB-Septin-like GTPase superfamily. EngB GTPase family. Mg(2+) is required as a cofactor.

Necessary for normal cell division and for the maintenance of normal septation. The protein is Probable GTP-binding protein EngB of Porphyromonas gingivalis (strain ATCC 33277 / DSM 20709 / CIP 103683 / JCM 12257 / NCTC 11834 / 2561).